A 205-amino-acid polypeptide reads, in one-letter code: Thymidylate kinase (205 aa).

Position 7-14 (7-14 (GIDGSGKT)) interacts with ATP.

The protein belongs to the thymidylate kinase family.

It catalyses the reaction dTMP + ATP = dTDP + ADP. Its function is as follows. Phosphorylation of dTMP to form dTDP in both de novo and salvage pathways of dTTP synthesis. The sequence is that of Thymidylate kinase from Wolbachia pipientis subsp. Culex pipiens (strain wPip).